Reading from the N-terminus, the 338-residue chain is Ketol-acid reductoisomerase (NADP(+)) (338 aa).

Positions 1-181 (MQVYYDKDAD…GGGRAGVIET (181 aa)) constitute a KARI N-terminal Rossmann domain. NADP(+) contacts are provided by residues 24 to 27 (YGSQ), R47, S50, S52, and 82 to 85 (DEHQ). H107 is an active-site residue. G133 is an NADP(+) binding site. The KARI C-terminal knotted domain occupies 182-327 (SFREETETDL…ERLRGMMPWI (146 aa)). Mg(2+) contacts are provided by D190, E194, E226, and E230. S251 serves as a coordination point for substrate.

It belongs to the ketol-acid reductoisomerase family. Mg(2+) is required as a cofactor.

It catalyses the reaction (2R)-2,3-dihydroxy-3-methylbutanoate + NADP(+) = (2S)-2-acetolactate + NADPH + H(+). The catalysed reaction is (2R,3R)-2,3-dihydroxy-3-methylpentanoate + NADP(+) = (S)-2-ethyl-2-hydroxy-3-oxobutanoate + NADPH + H(+). Its pathway is amino-acid biosynthesis; L-isoleucine biosynthesis; L-isoleucine from 2-oxobutanoate: step 2/4. The protein operates within amino-acid biosynthesis; L-valine biosynthesis; L-valine from pyruvate: step 2/4. Functionally, involved in the biosynthesis of branched-chain amino acids (BCAA). Catalyzes an alkyl-migration followed by a ketol-acid reduction of (S)-2-acetolactate (S2AL) to yield (R)-2,3-dihydroxy-isovalerate. In the isomerase reaction, S2AL is rearranged via a Mg-dependent methyl migration to produce 3-hydroxy-3-methyl-2-ketobutyrate (HMKB). In the reductase reaction, this 2-ketoacid undergoes a metal-dependent reduction by NADPH to yield (R)-2,3-dihydroxy-isovalerate. This Alkalilimnicola ehrlichii (strain ATCC BAA-1101 / DSM 17681 / MLHE-1) protein is Ketol-acid reductoisomerase (NADP(+)).